A 58-amino-acid polypeptide reads, in one-letter code: uncharacterized protein (58 aa).

Residues Val-12–Phe-32 form a helical membrane-spanning segment.

It is found in the membrane. This is an uncharacterized protein from Saccharomyces cerevisiae (strain ATCC 204508 / S288c) (Baker's yeast).